A 766-amino-acid chain; its full sequence is 5-methyltetrahydropteroyltriglutamate--homocysteine methyltransferase (766 aa).

Residues 16-19 (RELK) and K119 contribute to the 5-methyltetrahydropteroyltri-L-glutamate site. L-homocysteine contacts are provided by residues 440-442 (IGS) and E493. Residues 440–442 (IGS) and E493 each bind L-methionine. 5-methyltetrahydropteroyltri-L-glutamate-binding positions include 524–525 (RC) and W570. D608 is a binding site for L-homocysteine. D608 contacts L-methionine. E614 contributes to the 5-methyltetrahydropteroyltri-L-glutamate binding site. Residues H650, C652, and E674 each contribute to the Zn(2+) site. The active-site Proton donor is H703. C735 is a binding site for Zn(2+).

Belongs to the vitamin-B12 independent methionine synthase family. Zn(2+) is required as a cofactor.

It catalyses the reaction 5-methyltetrahydropteroyltri-L-glutamate + L-homocysteine = tetrahydropteroyltri-L-glutamate + L-methionine. It functions in the pathway amino-acid biosynthesis; L-methionine biosynthesis via de novo pathway; L-methionine from L-homocysteine (MetE route): step 1/1. Its function is as follows. Catalyzes the transfer of a methyl group from 5-methyltetrahydrofolate to homocysteine resulting in methionine formation. The chain is 5-methyltetrahydropteroyltriglutamate--homocysteine methyltransferase from Pseudomonas aeruginosa (strain UCBPP-PA14).